The sequence spans 411 residues: Multidrug resistance protein MdtH (411 aa).

11 consecutive transmembrane segments (helical) span residues 13 to 33, 45 to 65, 73 to 95, 99 to 116, 139 to 159, 165 to 185, 213 to 233, 243 to 263, 288 to 308, 340 to 360, and 365 to 385; these read YFLL…FPLI, ALLV…LGIF, LGAK…FMGI, PWLL…GTLF, LLMI…SWLL, LVCL…AWLL, YVFT…ILPI, AAVR…LYPI, IIPI…GIFY, LGLA…YDMG, and IPQL…LGFY.

It belongs to the major facilitator superfamily. DHA1 family. MdtH (TC 2.A.1.2.21) subfamily.

It is found in the cell membrane. The chain is Multidrug resistance protein MdtH from Baumannia cicadellinicola subsp. Homalodisca coagulata.